Reading from the N-terminus, the 271-residue chain is tRNA (guanine-N(1)-)-methyltransferase (271 aa).

Residues G120 and 145-150 (IGDYVL) each bind S-adenosyl-L-methionine.

The protein belongs to the RNA methyltransferase TrmD family. In terms of assembly, homodimer.

It is found in the cytoplasm. It catalyses the reaction guanosine(37) in tRNA + S-adenosyl-L-methionine = N(1)-methylguanosine(37) in tRNA + S-adenosyl-L-homocysteine + H(+). In terms of biological role, specifically methylates guanosine-37 in various tRNAs. This is tRNA (guanine-N(1)-)-methyltransferase from Bifidobacterium longum subsp. infantis (strain ATCC 15697 / DSM 20088 / JCM 1222 / NCTC 11817 / S12).